A 275-amino-acid chain; its full sequence is MSRPEELAPPEIFYNDSEAHKYTGSTRVQHIQAKMTLRALELLNLQPCSFILDIGCGSGLSGEILTQEGDHVWCGLDISPSMLATGLSRELEGDLMLQDMGTGIPFRAGSFDAAISISAIQWLCNADTSYNDPKQRLMRFFNTLYAALKKGGKFVAQFYPKNDDQVDDILQSAKVAGFSGGLVVDDPESKKNKKYYLVLSSGAPPQGEEQVNLDGVTMDEENVNLKKQLRQRLKGGKDKESAKSFILRKKELMKRRGRKVAKDSKFTGRKRRHRF.

Positions 256–275 are disordered; it reads RGRKVAKDSKFTGRKRRHRF. The Nuclear localization signal motif lies at 257–264; sequence GRKVAKDS.

Belongs to the class I-like SAM-binding methyltransferase superfamily. BUD23/WBSCR22 family. Interacts with TRM112. Interacts with ECM16.

It is found in the cytoplasm. Its subcellular location is the nucleus. The enzyme catalyses guanosine(1575) in yeast 18S rRNA + S-adenosyl-L-methionine = N(7)-methylguanosine(1575) in yeast 18S rRNA + S-adenosyl-L-homocysteine. S-adenosyl-L-methionine-dependent methyltransferase that specifically methylates the N(7) position of guanine 1575 (m7G1575) in 18S rRNA. Requires the methyltransferase adapter protein TRM112 for full rRNA methyltransferase activity. Important for biogenesis end export of the 40S ribosomal subunit independent on its methyltransferase activity. Required for efficient cleavage of the primary 35S precursor rRNA at site A2. Involved in positioning the proximal bud pole signal. The chain is 18S rRNA (guanine(1575)-N(7))-methyltransferase (BUD23) from Saccharomyces cerevisiae (strain ATCC 204508 / S288c) (Baker's yeast).